We begin with the raw amino-acid sequence, 279 residues long: Biotin synthase (279 aa).

The Radical SAM core domain occupies K2–R228. Residues C17, C21, and C24 each contribute to the [4Fe-4S] cluster site. Residues C61, C96, C154, and R221 each contribute to the [2Fe-2S] cluster site.

It belongs to the radical SAM superfamily. Biotin synthase family. As to quaternary structure, homodimer. It depends on [4Fe-4S] cluster as a cofactor. [2Fe-2S] cluster is required as a cofactor.

It carries out the reaction (4R,5S)-dethiobiotin + (sulfur carrier)-SH + 2 reduced [2Fe-2S]-[ferredoxin] + 2 S-adenosyl-L-methionine = (sulfur carrier)-H + biotin + 2 5'-deoxyadenosine + 2 L-methionine + 2 oxidized [2Fe-2S]-[ferredoxin]. It participates in cofactor biosynthesis; biotin biosynthesis; biotin from 7,8-diaminononanoate: step 2/2. Functionally, catalyzes the conversion of dethiobiotin (DTB) to biotin by the insertion of a sulfur atom into dethiobiotin via a radical-based mechanism. This Campylobacter curvus (strain 525.92) protein is Biotin synthase.